A 216-amino-acid polypeptide reads, in one-letter code: Ras-related protein Rab-2B (216 aa).

Gly-16, Val-17, Gly-18, Lys-19, Ser-20, and Cys-21 together coordinate GDP. GTP contacts are provided by Gly-16, Val-17, Gly-18, Lys-19, Ser-20, Cys-21, and Thr-38. Ser-20 is a binding site for Mg(2+). A Switch 1 motif is present at residues 37–42; that stretch reads LTIGVE. The Mg(2+) site is built by Thr-38 and Asp-61. The Switch 2 signature appears at 63-72; it reads AGQESFRSIT. The GTP site is built by Gly-64, Asn-119, Lys-120, Asp-122, Ala-150, and Lys-151. A GDP-binding site is contributed by Asn-119. Residues Asp-122, Ala-150, and Lys-151 each coordinate GDP. Positions 189-216 are disordered; the sequence is PQQSISTSVGPSASQRNSRDIGSNSGCC. At Ser-202 the chain carries Phosphoserine. Residues Cys-215 and Cys-216 are each lipidated (S-geranylgeranyl cysteine).

The protein belongs to the small GTPase superfamily. Rab family. Interacts (in GTP-bound form) with GARIN4 (via N-terminus). Interacts (in GTP-bound form) with GARIN5A. Interacts (in GTP-bound form) with GARIN1B. Interacts with VPS39 and VPS41. Mg(2+) serves as cofactor. Expressed in kidney, prostate, lung, liver, thymus, colon, pancreas, and skeletal muscle, and low levels in placenta. Not detected in heart, brain, spleen, testis, ovary, small intestine and leukocyte.

Its subcellular location is the cell membrane. The protein localises to the endoplasmic reticulum membrane. It localises to the golgi apparatus membrane. The protein resides in the cytoplasmic vesicle. It is found in the secretory vesicle. Its subcellular location is the acrosome. The protein localises to the autophagosome membrane. The enzyme catalyses GTP + H2O = GDP + phosphate + H(+). With respect to regulation, regulated by guanine nucleotide exchange factors (GEFs) which promote the exchange of bound GDP for free GTP, GTPase activating proteins (GAPs) which increase the GTP hydrolysis activity, and GDP dissociation inhibitors (GDIs) which inhibit the dissociation of the nucleotide from the GTPase. Its function is as follows. The small GTPases Rab are key regulators of intracellular membrane trafficking, from the formation of transport vesicles to their fusion with membranes. Rabs cycle between active GTP-bound and inactive GDP-bound states. In their active state, drive transport of vesicular carriers from donor organelles to acceptor organelles to regulate the membrane traffic that maintains organelle identity and morphology. Regulates the compacted morphology of the Golgi. Promotes cytosolic DNA-induced innate immune responses. Regulates IFN responses against DNA viruses by regulating the CGAS-STING signaling axis. Together with RAB2A redundantly required for efficient autophagic flux. The protein is Ras-related protein Rab-2B of Homo sapiens (Human).